Here is a 306-residue protein sequence, read N- to C-terminus: Curved DNA-binding protein (306 aa).

Positions Asp-5–Trp-69 constitute a J domain.

It is found in the cytoplasm. The protein resides in the nucleoid. DNA-binding protein that preferentially recognizes a curved DNA sequence. It is probably a functional analog of DnaJ; displays overlapping activities with DnaJ, but functions under different conditions, probably acting as a molecular chaperone in an adaptive response to environmental stresses other than heat shock. Lacks autonomous chaperone activity; binds native substrates and targets them for recognition by DnaK. Its activity is inhibited by the binding of CbpM. In Shigella flexneri, this protein is Curved DNA-binding protein.